The sequence spans 249 residues: 2,3-bisphosphoglycerate-dependent phosphoglycerate mutase (249 aa).

Substrate-binding positions include 8–15 (RHGQSVWN), 21–22 (TG), Arg-60, 87–90 (ERHY), Lys-98, 114–115 (RR), and 183–184 (GN). Catalysis depends on His-9, which acts as the Tele-phosphohistidine intermediate. Residue Glu-87 is the Proton donor/acceptor of the active site.

It belongs to the phosphoglycerate mutase family. BPG-dependent PGAM subfamily. In terms of assembly, homodimer.

The catalysed reaction is (2R)-2-phosphoglycerate = (2R)-3-phosphoglycerate. It functions in the pathway carbohydrate degradation; glycolysis; pyruvate from D-glyceraldehyde 3-phosphate: step 3/5. In terms of biological role, catalyzes the interconversion of 2-phosphoglycerate and 3-phosphoglycerate. The protein is 2,3-bisphosphoglycerate-dependent phosphoglycerate mutase of Solidesulfovibrio magneticus (strain ATCC 700980 / DSM 13731 / RS-1) (Desulfovibrio magneticus).